Consider the following 701-residue polypeptide: 1,4-alpha-glucan branching enzyme GlgB (701 aa).

Asp-381 functions as the Nucleophile in the catalytic mechanism. Catalysis depends on Glu-434, which acts as the Proton donor.

The protein belongs to the glycosyl hydrolase 13 family. GlgB subfamily. As to quaternary structure, monomer.

The catalysed reaction is Transfers a segment of a (1-&gt;4)-alpha-D-glucan chain to a primary hydroxy group in a similar glucan chain.. It participates in glycan biosynthesis; glycogen biosynthesis. Its function is as follows. Catalyzes the formation of the alpha-1,6-glucosidic linkages in glycogen by scission of a 1,4-alpha-linked oligosaccharide from growing alpha-1,4-glucan chains and the subsequent attachment of the oligosaccharide to the alpha-1,6 position. This Jannaschia sp. (strain CCS1) protein is 1,4-alpha-glucan branching enzyme GlgB.